The chain runs to 210 residues: Guanylate kinase (210 aa).

In terms of domain architecture, Guanylate kinase-like spans 8–188; the sequence is GNLFIIAAPS…SLASLEHIVL (181 aa). 15 to 22 is a binding site for ATP; sequence APSGAGKS.

Belongs to the guanylate kinase family.

The protein localises to the cytoplasm. The enzyme catalyses GMP + ATP = GDP + ADP. Its function is as follows. Essential for recycling GMP and indirectly, cGMP. This chain is Guanylate kinase, found in Idiomarina loihiensis (strain ATCC BAA-735 / DSM 15497 / L2-TR).